Here is a 153-residue protein sequence, read N- to C-terminus: Aspartate carbamoyltransferase regulatory chain (153 aa).

Cysteine 109, cysteine 114, cysteine 138, and cysteine 141 together coordinate Zn(2+).

This sequence belongs to the PyrI family. Contains catalytic and regulatory chains. Zn(2+) is required as a cofactor.

In terms of biological role, involved in allosteric regulation of aspartate carbamoyltransferase. This chain is Aspartate carbamoyltransferase regulatory chain, found in Salmonella schwarzengrund (strain CVM19633).